The chain runs to 357 residues: NADH-quinone oxidoreductase subunit H (357 aa).

Helical transmembrane passes span 25-45, 94-114, 130-150, 166-186, 201-221, 254-274, 294-314, and 329-349; these read ILII…VVAY, IYLF…VWVV, LLYV…AGWA, LLVS…MIAG, IIYW…ISAL, FFLA…VMFF, VPGI…YLWV, and LSWK…ALMT.

This sequence belongs to the complex I subunit 1 family. In terms of assembly, NDH-1 is composed of 14 different subunits. Subunits NuoA, H, J, K, L, M, N constitute the membrane sector of the complex.

It localises to the cell inner membrane. The enzyme catalyses a quinone + NADH + 5 H(+)(in) = a quinol + NAD(+) + 4 H(+)(out). Its function is as follows. NDH-1 shuttles electrons from NADH, via FMN and iron-sulfur (Fe-S) centers, to quinones in the respiratory chain. The immediate electron acceptor for the enzyme in this species is believed to be ubiquinone. Couples the redox reaction to proton translocation (for every two electrons transferred, four hydrogen ions are translocated across the cytoplasmic membrane), and thus conserves the redox energy in a proton gradient. This subunit may bind ubiquinone. This chain is NADH-quinone oxidoreductase subunit H, found in Ruthia magnifica subsp. Calyptogena magnifica.